A 555-amino-acid chain; its full sequence is Energy-dependent translational throttle protein EttA (555 aa).

ABC transporter domains are found at residues 6 to 259 (YTMH…AQEA) and 324 to 550 (LEVS…RIKY). 39–46 (GLNGAGKS) provides a ligand contact to ATP. An arm region spans residues 95–139 (SEVVNALKRLDEVYALYADPDADFDKLAAEQGRLEEIIQAHDGHN). Residues 242–322 (GNYSSWLEQK…IPPGPRLGDK (81 aa)) form a ptIM region. 356 to 363 (GPNGAGKS) lines the ATP pocket.

Belongs to the ABC transporter superfamily. ABCF family. Translational throttle EttA subfamily. As to quaternary structure, monomer. Probably contacts ribosomal proteins L1, L5, L33 and S7, the 16S and 23S rRNA and the P-site containing tRNA(fMet).

It localises to the cytoplasm. The enzyme catalyses ATP + H2O = ADP + phosphate + H(+). A translation factor that gates the progression of the 70S ribosomal initiation complex (IC, containing tRNA(fMet) in the P-site) into the translation elongation cycle by using a mechanism sensitive to the ATP/ADP ratio. Binds to the 70S ribosome E-site where it modulates the state of the translating ribosome during subunit translocation. ATP hydrolysis probably frees it from the ribosome, which can enter the elongation phase. The protein is Energy-dependent translational throttle protein EttA of Escherichia coli O6:H1 (strain CFT073 / ATCC 700928 / UPEC).